The primary structure comprises 402 residues: Lipid-A-disaccharide synthase (402 aa).

It belongs to the LpxB family.

The catalysed reaction is a lipid X + a UDP-2-N,3-O-bis[(3R)-3-hydroxyacyl]-alpha-D-glucosamine = a lipid A disaccharide + UDP + H(+). It functions in the pathway bacterial outer membrane biogenesis; LPS lipid A biosynthesis. In terms of biological role, condensation of UDP-2,3-diacylglucosamine and 2,3-diacylglucosamine-1-phosphate to form lipid A disaccharide, a precursor of lipid A, a phosphorylated glycolipid that anchors the lipopolysaccharide to the outer membrane of the cell. This is Lipid-A-disaccharide synthase from Cupriavidus pinatubonensis (strain JMP 134 / LMG 1197) (Cupriavidus necator (strain JMP 134)).